Reading from the N-terminus, the 343-residue chain is Ribosomal RNA small subunit methyltransferase C (343 aa).

Belongs to the methyltransferase superfamily. RsmC family. Monomer.

It localises to the cytoplasm. The enzyme catalyses guanosine(1207) in 16S rRNA + S-adenosyl-L-methionine = N(2)-methylguanosine(1207) in 16S rRNA + S-adenosyl-L-homocysteine + H(+). Functionally, specifically methylates the guanine in position 1207 of 16S rRNA in the 30S particle. This chain is Ribosomal RNA small subunit methyltransferase C, found in Escherichia coli O6:K15:H31 (strain 536 / UPEC).